Reading from the N-terminus, the 384-residue chain is N-acetyldiaminopimelate deacetylase (384 aa).

The active site involves D74. The active-site Proton acceptor is the E133.

This sequence belongs to the peptidase M20A family. N-acetyldiaminopimelate deacetylase subfamily.

The enzyme catalyses N-acetyl-(2S,6S)-2,6-diaminopimelate + H2O = (2S,6S)-2,6-diaminopimelate + acetate. It functions in the pathway amino-acid biosynthesis; L-lysine biosynthesis via DAP pathway; LL-2,6-diaminopimelate from (S)-tetrahydrodipicolinate (acetylase route): step 3/3. In terms of biological role, catalyzes the conversion of N-acetyl-diaminopimelate to diaminopimelate and acetate. The protein is N-acetyldiaminopimelate deacetylase of Leuconostoc mesenteroides subsp. mesenteroides (strain ATCC 8293 / DSM 20343 / BCRC 11652 / CCM 1803 / JCM 6124 / NCDO 523 / NBRC 100496 / NCIMB 8023 / NCTC 12954 / NRRL B-1118 / 37Y).